Reading from the N-terminus, the 161-residue chain is MAGFIGKELHALDEKGRLMIPARFRRDFVRGNGVVAEDKRKGSDGSGDGIYLYLMKAPDGSLELYEPDVWQEMKKSLAGLSDFNPEERLLKTMIYESLDVVTVDRQGRIPLTKEFLDHAGIMKELVIIGADTKMVIWEPERLASVLHDNAGRFTALAGRYF.

SpoVT-AbrB domains follow at residues 7–69 and 98–141; these read KELH…EPDV and LDVV…EPER.

Belongs to the MraZ family. In terms of assembly, forms oligomers.

It is found in the cytoplasm. The protein resides in the nucleoid. This chain is Transcriptional regulator MraZ, found in Chlorobium limicola (strain DSM 245 / NBRC 103803 / 6330).